The sequence spans 426 residues: Tol-Pal system protein TolB (426 aa).

The first 24 residues, 1–24 (MKLKSRYTSLISVVSIFFSSMVMA), serve as a signal peptide directing secretion.

This sequence belongs to the TolB family. In terms of assembly, the Tol-Pal system is composed of five core proteins: the inner membrane proteins TolA, TolQ and TolR, the periplasmic protein TolB and the outer membrane protein Pal. They form a network linking the inner and outer membranes and the peptidoglycan layer.

The protein resides in the periplasm. In terms of biological role, part of the Tol-Pal system, which plays a role in outer membrane invagination during cell division and is important for maintaining outer membrane integrity. The chain is Tol-Pal system protein TolB from Haemophilus ducreyi (strain 35000HP / ATCC 700724).